Consider the following 211-residue polypeptide: Large ribosomal subunit protein eL13 (211 aa).

Lys-16 is subject to N6-acetyllysine. Ser-52, Ser-77, and Ser-106 each carry phosphoserine. Residues Lys-123 and Lys-145 each participate in a glycyl lysine isopeptide (Lys-Gly) (interchain with G-Cter in SUMO2) cross-link. Lys-174 is covalently cross-linked (Glycyl lysine isopeptide (Lys-Gly) (interchain with G-Cter in SUMO1); alternate). Glycyl lysine isopeptide (Lys-Gly) (interchain with G-Cter in SUMO2); alternate cross-links involve residues Lys-174 and Lys-177. Residue Lys-177 is modified to N6-acetyllysine; alternate.

Belongs to the eukaryotic ribosomal protein eL13 family. In terms of assembly, component of the 60S large ribosomal subunit (LSU).

The protein localises to the cytoplasm. Component of the ribosome, a large ribonucleoprotein complex responsible for the synthesis of proteins in the cell. The small ribosomal subunit (SSU) binds messenger RNAs (mRNAs) and translates the encoded message by selecting cognate aminoacyl-transfer RNA (tRNA) molecules. The large subunit (LSU) contains the ribosomal catalytic site termed the peptidyl transferase center (PTC), which catalyzes the formation of peptide bonds, thereby polymerizing the amino acids delivered by tRNAs into a polypeptide chain. The nascent polypeptides leave the ribosome through a tunnel in the LSU and interact with protein factors that function in enzymatic processing, targeting, and the membrane insertion of nascent chains at the exit of the ribosomal tunnel. As part of the LSU, it is probably required for its formation and the maturation of rRNAs. Plays a role in bone development. The polypeptide is Large ribosomal subunit protein eL13 (RPL13) (Cricetulus griseus (Chinese hamster)).